The sequence spans 573 residues: uncharacterized protein (573 aa).

This is an uncharacterized protein from Treponema pallidum (strain Nichols).